We begin with the raw amino-acid sequence, 182 residues long: Isopentenyl-diphosphate Delta-isomerase (182 aa).

Residues His-25 and His-32 each contribute to the Mn(2+) site. A Nudix hydrolase domain is found at 30–164 (LLHLAFSSWL…PWAFSPWMVM (135 aa)). The active site involves Cys-67. Residue His-69 coordinates Mn(2+). Residue Glu-87 participates in Mg(2+) binding. Mn(2+) contacts are provided by Glu-114 and Glu-116. Glu-116 is a catalytic residue.

It belongs to the IPP isomerase type 1 family. In terms of assembly, homodimer. The cofactor is Mg(2+). Mn(2+) serves as cofactor.

Its subcellular location is the cytoplasm. It carries out the reaction isopentenyl diphosphate = dimethylallyl diphosphate. Its pathway is isoprenoid biosynthesis; dimethylallyl diphosphate biosynthesis; dimethylallyl diphosphate from isopentenyl diphosphate: step 1/1. In terms of biological role, catalyzes the 1,3-allylic rearrangement of the homoallylic substrate isopentenyl (IPP) to its highly electrophilic allylic isomer, dimethylallyl diphosphate (DMAPP). In Escherichia coli O45:K1 (strain S88 / ExPEC), this protein is Isopentenyl-diphosphate Delta-isomerase.